We begin with the raw amino-acid sequence, 143 residues long: MFGNIGWGEFMVLLVAALVILGPERLPGAVSWVTKSLRQVREYASGASQQLKDELGPEFEDLRKPLADLNQLRGMTPRAVITKHLLDGDDSILTGNFDKPGSVSFDKSNPGTKAVSADPSTPTAPQNKPLAAGERPPIDLDAT.

A helical transmembrane segment spans residues 2-22 (FGNIGWGEFMVLLVAALVILG). Residues 97–143 (FDKPGSVSFDKSNPGTKAVSADPSTPTAPQNKPLAAGERPPIDLDAT) form a disordered region.

It belongs to the TatB family. As to quaternary structure, the Tat system comprises two distinct complexes: a TatABC complex, containing multiple copies of TatA, TatB and TatC subunits, and a separate TatA complex, containing only TatA subunits. Substrates initially bind to the TatABC complex, which probably triggers association of the separate TatA complex to form the active translocon.

Its subcellular location is the cell membrane. Functionally, part of the twin-arginine translocation (Tat) system that transports large folded proteins containing a characteristic twin-arginine motif in their signal peptide across membranes. Together with TatC, TatB is part of a receptor directly interacting with Tat signal peptides. TatB may form an oligomeric binding site that transiently accommodates folded Tat precursor proteins before their translocation. This is Sec-independent protein translocase protein TatB from Rhodococcus opacus (strain B4).